The chain runs to 107 residues: SH3 domain-binding glutamic acid-rich-like protein 2 (107 aa).

The SH3-binding motif lies at 61–67 (QGNPLPP).

It belongs to the SH3BGR family. As to expression, highly expressed in brain, placenta, liver and kidney. Expressed in retina.

It is found in the nucleus. This is SH3 domain-binding glutamic acid-rich-like protein 2 (SH3BGRL2) from Homo sapiens (Human).